Consider the following 653-residue polypeptide: Leishmanolysin homolog (653 aa).

Positions 1–44 (MHAPPTATRRSGPRRTHGIMARLVRLAAGVLVVTLVIGALTALS) are cleaved as a signal peptide. Residues 45-113 (ADDAKTHPHK…ALAGDSAPDV (69 aa)) constitute a propeptide, activation peptide. Cystine bridges form between cysteine 138–cysteine 155 and cysteine 203–cysteine 242. Histidine 276 is a binding site for Zn(2+). The active site involves glutamate 277. 2 residues coordinate Zn(2+): histidine 280 and histidine 346. 7 disulfides stabilise this stretch: cysteine 326/cysteine 398, cysteine 405/cysteine 468, cysteine 418/cysteine 437, cysteine 427/cysteine 502, cysteine 479/cysteine 524, cysteine 529/cysteine 579, and cysteine 549/cysteine 572. Residues asparagine 383 and asparagine 409 are each glycosylated (N-linked (GlcNAc...) asparagine). Asparagine 569 carries an N-linked (GlcNAc...) asparagine glycan. Residues 590-631 (ESMTNSGSGSSRPAPVEPSGSGSGSSAATTAPSPTRDGSAAA) form a disordered region. The segment covering 591-600 (SMTNSGSGSS) has biased composition (polar residues). Over residues 607 to 631 (PSGSGSGSSAATTAPSPTRDGSAAA) the composition is skewed to low complexity. The GPI-anchor amidated serine moiety is linked to residue serine 628. Residues 629–653 (AAADRIAPRTAAVALLALAVAAACV) constitute a propeptide, removed in mature form.

The protein belongs to the peptidase M8 family. Zn(2+) is required as a cofactor.

It is found in the cell membrane. It catalyses the reaction Preference for hydrophobic residues at P1 and P1' and basic residues at P2' and P3'. A model nonapeptide is cleaved at -Ala-Tyr-|-Leu-Lys-Lys-.. Its function is as follows. Plays an integral role during the infection of macrophages in the mammalian host. The polypeptide is Leishmanolysin homolog (gp63) (Crithidia fasciculata).